Reading from the N-terminus, the 335-residue chain is Polyprenol dehydrogenase (335 aa).

Positions 55, 208, 212, and 245 each coordinate NAD(+). Tyrosine 208 acts as the Proton acceptor in catalysis.

Belongs to the short-chain dehydrogenases/reductases (SDR) family.

The protein resides in the lipid droplet. It localises to the secreted. The enzyme catalyses a di-trans,poly-cis-polyprenol + NAD(+) = a di-trans,poly-cis-polyprenal + NADH + H(+). It catalyses the reaction a di-trans,poly-cis-polyprenol + NADP(+) = a di-trans,poly-cis-polyprenal + NADPH + H(+). It carries out the reaction a di-trans,poly-cis-dolichol + NADP(+) = a di-trans,poly-cis-dolichal + NADPH + H(+). The catalysed reaction is a di-trans,poly-cis-dolichol + NAD(+) = a di-trans,poly-cis-dolichal + NADH + H(+). It participates in protein modification; protein glycosylation. Functionally, oxidoreductase that plays a key role in early steps of protein N-linked glycosylation by mediating two non-consecutive steps in dolichol biosynthesis. Acts both as a NAD(+)-dependent dehydrogenase and as a NADPH-dependent reductase during the conversion of polyprenol into dolichol. First catalyzes the NAD(+)-dependent dehydrogenation of polyprenol into polyprenal; polyprenal is then reduced into dolichal by SRD5A3. It then catalyzes the NADPH-dependent reduction of dolichal into dolichol. May also acts as a positive regulator of starvation-induced autophagy. The polypeptide is Polyprenol dehydrogenase (Dhrsx) (Mus musculus (Mouse)).